Reading from the N-terminus, the 748-residue chain is Catalase-peroxidase (748 aa).

Residues 92–238 (WHSAGTYRIG…LAAVQMGLIY (147 aa)) constitute a cross-link (tryptophyl-tyrosyl-methioninium (Trp-Tyr) (with M-264)). His93 (proton acceptor) is an active-site residue. The tryptophyl-tyrosyl-methioninium (Tyr-Met) (with W-92) cross-link spans 238-264 (YVNPEGPDGNPDPIASARDIRDTFARM). His279 lines the heme b pocket.

The protein belongs to the peroxidase family. Peroxidase/catalase subfamily. Homodimer or homotetramer. Heme b serves as cofactor. Post-translationally, formation of the three residue Trp-Tyr-Met cross-link is important for the catalase, but not the peroxidase activity of the enzyme.

The catalysed reaction is H2O2 + AH2 = A + 2 H2O. It catalyses the reaction 2 H2O2 = O2 + 2 H2O. Bifunctional enzyme with both catalase and broad-spectrum peroxidase activity. The protein is Catalase-peroxidase of Xanthomonas euvesicatoria pv. vesicatoria (strain 85-10) (Xanthomonas campestris pv. vesicatoria).